A 182-amino-acid polypeptide reads, in one-letter code: Small ribosomal subunit protein uS5 (182 aa).

The S5 DRBM domain maps to 16–79 (FVDRLVHINR…ESAKRGMIYV (64 aa)).

Belongs to the universal ribosomal protein uS5 family. In terms of assembly, part of the 30S ribosomal subunit. Contacts proteins S4 and S8.

In terms of biological role, with S4 and S12 plays an important role in translational accuracy. Functionally, located at the back of the 30S subunit body where it stabilizes the conformation of the head with respect to the body. The protein is Small ribosomal subunit protein uS5 of Bartonella tribocorum (strain CIP 105476 / IBS 506).